The following is an 866-amino-acid chain: Probable beta-glucosidase F (866 aa).

Positions M1–S20 are cleaved as a signal peptide. N65, N73, and N257 each carry an N-linked (GlcNAc...) asparagine glycan. D285 is a catalytic residue. 8 N-linked (GlcNAc...) asparagine glycosylation sites follow: N328, N360, N395, N421, N474, N659, N664, and N724. The disordered stretch occupies residues S725–A748.

Belongs to the glycosyl hydrolase 3 family.

It is found in the secreted. It carries out the reaction Hydrolysis of terminal, non-reducing beta-D-glucosyl residues with release of beta-D-glucose.. It participates in glycan metabolism; cellulose degradation. In terms of biological role, beta-glucosidases are one of a number of cellulolytic enzymes involved in the degradation of cellulosic biomass. Catalyzes the last step releasing glucose from the inhibitory cellobiose. This Aspergillus oryzae (strain ATCC 42149 / RIB 40) (Yellow koji mold) protein is Probable beta-glucosidase F (bglF).